A 465-amino-acid polypeptide reads, in one-letter code: WAS protein family homolog 2 (465 aa).

Residues methionine 1–glutamine 54 are required for WASH complex assembly. Residues methionine 1 to isoleucine 167 are WHD1. Residue lysine 220 forms a Glycyl lysine isopeptide (Lys-Gly) (interchain with G-Cter in ubiquitin) linkage. Disordered regions lie at residues glutamine 297–histidine 407 and glycine 422–serine 465. Over residues threonine 302–proline 314 the composition is skewed to pro residues. Residues glutamine 349 to serine 465 are VCA. One can recognise a WH2 domain in the interval glycine 361 to methionine 383. Residues serine 382–glutamine 398 are compositionally biased toward basic and acidic residues. The segment covering serine 424 to glycine 436 has biased composition (gly residues). Residues alanine 456 to serine 465 show a composition bias toward acidic residues.

The protein belongs to the WASH1 family. In terms of assembly, component of the WASH core complex also described as WASH regulatory complex (SHRC) composed of WASH (WASHC1, WASH2P or WASH3P), WASHC2 (WASHC2A or WASHC2C), WASHC3, WASHC4 and WASHC5. The WASH core complex associates with the F-actin-capping protein dimer (formed by CAPZA1, CAPZA2 or CAPZA3 and CAPZB) in a transient or substoichiometric manner which was initially described as WASH complex. Interacts (via WHD1 region) with WASHC2C; the interaction is direct. Interacts with alpha-tubulin. Interacts with BECN1; WASHC1 and AMBRA1 can competitively interact with BECN1. Interacts with BLOC1S2; may associate with the BLOC-1 complex. Interacts with tubulin gamma chain (TUBG1 or TUBG2). Interacts with EXOC1, EXOC4, EXOC8; in MMP14-positive endosomes in breast tumor cells; indicative for an association with the exocyst complex.

It is found in the early endosome membrane. The protein resides in the recycling endosome membrane. The protein localises to the late endosome. It localises to the cytoplasmic vesicle. Its subcellular location is the autophagosome. It is found in the cytoplasm. The protein resides in the cytoskeleton. The protein localises to the microtubule organizing center. It localises to the centrosome. Its subcellular location is the centriole. In terms of biological role, acts as a nucleation-promoting factor at the surface of endosomes, where it recruits and activates the Arp2/3 complex to induce actin polymerization, playing a key role in the fission of tubules that serve as transport intermediates during endosome sorting. Involved in endocytic trafficking of EGF. Involved in transferrin receptor recycling. Regulates the trafficking of endosomal alpha5beta1 integrin to the plasma membrane and involved in invasive cell migration. In T-cells involved in endosome-to-membrane recycling of receptors including T-cell receptor (TCR), CD28 and ITGAL; proposed to be implicated in T-cell proliferation and effector function. In dendritic cells involved in endosome-to-membrane recycling of major histocompatibility complex (MHC) class II probably involving retromer and subsequently allowing antigen sampling, loading and presentation during T-cell activation. Involved in Arp2/3 complex-dependent actin assembly driving Salmonella typhimurium invasion independent of ruffling. Involved in the exocytosis of MMP14 leading to matrix remodeling during invasive migration and implicating late endosome-to-plasma membrane tubular connections and cooperation with the exocyst complex. Involved in negative regulation of autophagy independently from its role in endosomal sorting by inhibiting BECN1 ubiquitination to inactivate PIK3C3/Vps34 activity. This chain is WAS protein family homolog 2 (WASH2P), found in Homo sapiens (Human).